Consider the following 290-residue polypeptide: 4-hydroxy-tetrahydrodipicolinate synthase (290 aa).

Position 44 (Ser44) interacts with pyruvate. The Proton donor/acceptor role is filled by Tyr132. Catalysis depends on Lys161, which acts as the Schiff-base intermediate with substrate. A pyruvate-binding site is contributed by Val202.

It belongs to the DapA family. In terms of assembly, homotetramer; dimer of dimers.

It is found in the cytoplasm. It carries out the reaction L-aspartate 4-semialdehyde + pyruvate = (2S,4S)-4-hydroxy-2,3,4,5-tetrahydrodipicolinate + H2O + H(+). The protein operates within amino-acid biosynthesis; L-lysine biosynthesis via DAP pathway; (S)-tetrahydrodipicolinate from L-aspartate: step 3/4. Functionally, catalyzes the condensation of (S)-aspartate-beta-semialdehyde [(S)-ASA] and pyruvate to 4-hydroxy-tetrahydrodipicolinate (HTPA). The sequence is that of 4-hydroxy-tetrahydrodipicolinate synthase from Hydrogenobaculum sp. (strain Y04AAS1).